The chain runs to 211 residues: Uracil phosphoribosyltransferase (211 aa).

Residues arginine 78, arginine 103, and 130 to 138 (DPMLATGGS) contribute to the 5-phospho-alpha-D-ribose 1-diphosphate site. Uracil is bound by residues isoleucine 193 and 198–200 (GDA). Aspartate 199 provides a ligand contact to 5-phospho-alpha-D-ribose 1-diphosphate.

The protein belongs to the UPRTase family. Requires Mg(2+) as cofactor.

The catalysed reaction is UMP + diphosphate = 5-phospho-alpha-D-ribose 1-diphosphate + uracil. Its pathway is pyrimidine metabolism; UMP biosynthesis via salvage pathway; UMP from uracil: step 1/1. Allosterically activated by GTP. In terms of biological role, catalyzes the conversion of uracil and 5-phospho-alpha-D-ribose 1-diphosphate (PRPP) to UMP and diphosphate. This Hahella chejuensis (strain KCTC 2396) protein is Uracil phosphoribosyltransferase.